A 147-amino-acid chain; its full sequence is Large ribosomal subunit protein uL22c (147 aa).

This sequence belongs to the universal ribosomal protein uL22 family. In terms of assembly, part of the 50S ribosomal subunit.

The protein resides in the plastid. Functionally, this protein binds specifically to 23S rRNA. In terms of biological role, the globular domain of the protein is located near the polypeptide exit tunnel on the outside of the subunit, while an extended beta-hairpin is found that lines the wall of the exit tunnel in the center of the 70S ribosome. This Cuscuta obtusiflora (Peruvian dodder) protein is Large ribosomal subunit protein uL22c (rpl22).